A 29-amino-acid polypeptide reads, in one-letter code: Cytochrome b6-f complex subunit 8 (29 aa).

The helical transmembrane segment at 3-23 (IVSLAWAVLMVVFTFSLSLVV) threads the bilayer.

This sequence belongs to the PetN family. In terms of assembly, the 4 large subunits of the cytochrome b6-f complex are cytochrome b6, subunit IV (17 kDa polypeptide, PetD), cytochrome f and the Rieske protein, while the 4 small subunits are PetG, PetL, PetM and PetN. The complex functions as a dimer.

It is found in the plastid. Its subcellular location is the chloroplast thylakoid membrane. Functionally, component of the cytochrome b6-f complex, which mediates electron transfer between photosystem II (PSII) and photosystem I (PSI), cyclic electron flow around PSI, and state transitions. The sequence is that of Cytochrome b6-f complex subunit 8 from Drimys granadensis.